Here is a 448-residue protein sequence, read N- to C-terminus: AYRQTENLLYGRSFHAEAHIVHHHSDFADVAEASKHLGGIAVVSIFLTNDKQRYNPTTNRALDTILNHLKDLIEFTEEEHVCRAENRRIKRTGIYSKLGVERACRENNPNYDADSPDGDPSNKCQLHKKARGCGDPIENVTFNPNDLLSSIPTYLTFEGGLTTPPCSESVIWIVAEHPAYISNKNIEYMNKLKSRIVNQTISDFGNLRPLHDPAERDVFRIIYGRYPPRREEDDERGDGRHDLRDDDDNYDDDDYYNDDYSNDDYYDDDYYYDDYDDDTDDDHKDDGRRDRGGGDDKGGRGKGDDRGGRDNGDNRTGRGNRNDRGRRGNGDDSGGRGNGNNRDGRGNGDSRDRNNGNGNGRENGGVRGNGNDRDGRRDNGNGGDNGTRRGNGDDRGGRRNEDRGENRRGKDDQERESEDGRRRRRRFNGRRRRRGRGDDKGDDKGDDN.

The region spanning 1–222 is the Alpha-carbonic anhydrase domain; that stretch reads AYRQTENLLY…PAERDVFRII (222 aa). Histidine 19 serves as a coordination point for Zn(2+). Asparagine 139 and asparagine 198 each carry an N-linked (GlcNAc...) asparagine glycan. Residues 229–448 are disordered; it reads RREEDDERGD…DKGDDKGDDN (220 aa). The segment covering 245–280 has biased composition (acidic residues); the sequence is DDDDNYDDDDYYNDDYSNDDYYDDDYYYDDYDDDTD. Composition is skewed to basic and acidic residues over residues 281–334 and 342–354; these read DDHK…DDSG and RDGR…RDRN. Residue asparagine 314 is glycosylated (N-linked (GlcNAc...) asparagine). Over residues 357-368 the composition is skewed to gly residues; that stretch reads NGNGRENGGVRG. Basic and acidic residues predominate over residues 370-379; sequence GNDRDGRRDN. A glycan (N-linked (GlcNAc...) asparagine) is linked at asparagine 385. Over residues 386 to 421 the composition is skewed to basic and acidic residues; it reads GTRRGNGDDRGGRRNEDRGENRRGKDDQERESEDGR. Basic residues predominate over residues 422-435; the sequence is RRRRRFNGRRRRRG. Basic and acidic residues predominate over residues 436–448; sequence RGDDKGDDKGDDN.

The protein belongs to the alpha-carbonic anhydrase family. As to expression, component of the acid-insoluble and acid-soluble organic matrix of calcified layers of the shell (at protein level).

It is found in the secreted. The enzyme catalyses hydrogencarbonate + H(+) = CO2 + H2O. In terms of biological role, reversible hydration of carbon dioxide. This is Putative carbonic anhydrase 2 from Lottia gigantea (Giant owl limpet).